The primary structure comprises 218 residues: MGWMHTARFLTTAAQLHHLPAIEVPEIAFVGRSNAGKSTCINTLTQQRQLAFASKKPGRTQHINLFALGKQGATDAVLADLPGYGYAAVSRSDKLRWQQVMLSYLVSRESLTAIVLLCDPRLGLTELDEALLNAVRPRVEAGLKFLVLLTKADKLTRAEQAKALSITRLQAGGGEVRMFSALKKQGVDEVAQLLWQWAHPVQKEDAAVEALPPSKDQN.

The 178-residue stretch at E23–P200 folds into the EngB-type G domain. GTP is bound by residues G31–S38, G58–H62, D80–G83, T150–D153, and F179–A181. Residues S38 and T60 each coordinate Mg(2+).

This sequence belongs to the TRAFAC class TrmE-Era-EngA-EngB-Septin-like GTPase superfamily. EngB GTPase family. The cofactor is Mg(2+).

Functionally, necessary for normal cell division and for the maintenance of normal septation. This Acidovorax ebreus (strain TPSY) (Diaphorobacter sp. (strain TPSY)) protein is Probable GTP-binding protein EngB.